The primary structure comprises 246 residues: tRNA pseudouridine synthase A (246 aa).

The active-site Nucleophile is the D52. Substrate is bound at residue Y111.

It belongs to the tRNA pseudouridine synthase TruA family. As to quaternary structure, homodimer.

It catalyses the reaction uridine(38/39/40) in tRNA = pseudouridine(38/39/40) in tRNA. Formation of pseudouridine at positions 38, 39 and 40 in the anticodon stem and loop of transfer RNAs. The sequence is that of tRNA pseudouridine synthase A from Ehrlichia ruminantium (strain Gardel).